The primary structure comprises 454 residues: MTTSNRRYHITTFGCQMNKADSERMAGILEDMGFKFSEDPNNADLILYNTCTIRDNAEQKVYSYLGRQAKRKHEQPDLTLVVAGCVAQQEGEALLRRVPELDLVMGPQHANRLKDLLESVFAGNQVVATEAVHIMEDITQARRDSTVTAWVNVIYGCNERCTYCVVPNVRGVEQSRTPAAVRAEMEELGRQGYKEITLLGQNIDAYGRDLPGATPEGRHLHTFTDLLYYVHDVPGVERIRFATSHPRYFTERLIKACAELPKVCEHFHIPFQSGDNQLLKAMARGYTQEKYRRIIDTIRRYMPDASISADAIVGFPGETEEQFENTLKLVDDIGFDQLNTAAYSPRPGTPAALWENQLSEEVKSDRLQRLNHLVNVKAAERSQRYMGRIEEVLVEEQNPKDQTQVMGRTGGNRLTFFKGDIHELKGQLVMVKINEVRAFSLTGEPIEMRQALPI.

The 117-residue stretch at 6–122 (RRYHITTFGC…LKDLLESVFA (117 aa)) folds into the MTTase N-terminal domain. [4Fe-4S] cluster contacts are provided by Cys15, Cys51, Cys85, Cys157, Cys161, and Cys164. The Radical SAM core domain occupies 143–380 (RDSTVTAWVN…NHLVNVKAAE (238 aa)). The TRAM domain occupies 383–447 (QRYMGRIEEV…AFSLTGEPIE (65 aa)).

It belongs to the methylthiotransferase family. MiaB subfamily. In terms of assembly, monomer. [4Fe-4S] cluster serves as cofactor.

Its subcellular location is the cytoplasm. It catalyses the reaction N(6)-dimethylallyladenosine(37) in tRNA + (sulfur carrier)-SH + AH2 + 2 S-adenosyl-L-methionine = 2-methylsulfanyl-N(6)-dimethylallyladenosine(37) in tRNA + (sulfur carrier)-H + 5'-deoxyadenosine + L-methionine + A + S-adenosyl-L-homocysteine + 2 H(+). Catalyzes the methylthiolation of N6-(dimethylallyl)adenosine (i(6)A), leading to the formation of 2-methylthio-N6-(dimethylallyl)adenosine (ms(2)i(6)A) at position 37 in tRNAs that read codons beginning with uridine. The protein is tRNA-2-methylthio-N(6)-dimethylallyladenosine synthase of Nostoc sp. (strain PCC 7120 / SAG 25.82 / UTEX 2576).